We begin with the raw amino-acid sequence, 556 residues long: CBS domain-containing protein CBSCBSPB3 (556 aa).

Polar residues-rich tracts occupy residues 1–20 (MSTQ…NSTV) and 30–44 (PVQS…NTSK). The interval 1–63 (MSTQATGPSS…SQAPSNGERT (63 aa)) is disordered. The residue at position 2 (serine 2) is an N-acetylserine. CBS domains are found at residues 68-127 (RLSK…RPDQ), 134-189 (MTRN…RMEK), 235-294 (ITDN…LSPE), and 302-360 (MTPN…ENSS). Residues 414 to 502 (GNSFSFKFED…KVLRLHLDFT (89 aa)) enclose the PB1 domain. The chain crosses the membrane as a helical span at residues 527-549 (WVSWRGGVVVTGAVVLTSIAIVV).

It localises to the membrane. In Arabidopsis thaliana (Mouse-ear cress), this protein is CBS domain-containing protein CBSCBSPB3 (CBSCBSPB3).